Here is a 308-residue protein sequence, read N- to C-terminus: GTPase Era (308 aa).

The 171-residue stretch at 9–179 (RAGFVALIGE…RAWLGASLPE (171 aa)) folds into the Era-type G domain. The interval 17 to 24 (GEPNAGKS) is G1. Position 17–24 (17–24 (GEPNAGKS)) interacts with GTP. Positions 43–47 (QTTRA) are G2. Positions 64-67 (DTPG) are G3. Residues 64–68 (DTPGL) and 129–132 (NKID) contribute to the GTP site. Positions 129-132 (NKID) are G4. Residues 158 to 160 (ISA) form a G5 region. The KH type-2 domain maps to 210–287 (LHQELPYQLT…HLFLQVKVRP (78 aa)).

Belongs to the TRAFAC class TrmE-Era-EngA-EngB-Septin-like GTPase superfamily. Era GTPase family. As to quaternary structure, monomer.

It is found in the cytoplasm. Its subcellular location is the cell inner membrane. An essential GTPase that binds both GDP and GTP, with rapid nucleotide exchange. Plays a role in 16S rRNA processing and 30S ribosomal subunit biogenesis and possibly also in cell cycle regulation and energy metabolism. The sequence is that of GTPase Era from Dinoroseobacter shibae (strain DSM 16493 / NCIMB 14021 / DFL 12).